The chain runs to 72 residues: MSPRASLEKELNSARLLHATINAMDVYTQNLINELQEARDSINDLQRAHERLKLVGAKAKLQIKRDEKKPKS.

A coiled-coil region spans residues 27–55; the sequence is YTQNLINELQEARDSINDLQRAHERLKLV.

This is an uncharacterized protein from Schizosaccharomyces pombe (strain 972 / ATCC 24843) (Fission yeast).